Consider the following 781-residue polypeptide: MNIAEEPSDEVISSGPEDTDICSQQTSASAEAGDQSIKIERKTSTGLQLEQLANTNLLTIRIKWQLQEEEDDHCNSRITDQIMDTIQHYKGISVNNSDTETYEFLPDTRRLQVLEQNKDIYLYEHGSQEYEKSYKDNEEEDDWRYDTVLQAQFKYPKSLENACTDISELLKSEPIGQHIDKWSIGVNKHALTYPGNIFVGGIAKSLSIGELSFLFSKYGPILSMKLIYDKTKGEPNGYGFISYPLGSQASLCIKELNGRTVNGSTLFINYHVERKERERIHWDHVKENNNDDNFRCLFIGNLPYHNPEKVETLITPKEVIEVIKKELSKKFPDFDIISYYFPKRSNTRSSSSVSFNEEGSVESNKSSNNTNGNAQDEDMLKGYGFIKLINHEQALAAIETFNGFMWHGNRLVVNKAVQHKVYNNHNSHDRHPSISNHNDMEVLEFANNPMYDYNNYTYDRYYFNNNKNGNSNDTSNVRYFDSVRSTPVAEKMDLFYPQRESFSEGRGQRVPRFMGNKFDMYQYPSTSYSLPIPMSNQQESNLYVKHIPLSWTDEDLYDFYKSFGEIISVKVITVGGSKNKYRQQSNDSSSDNDLPVGSSRGYGFVSFESPLDAAKAILNTDGYQVSKDQVLSVSFAQKRGNLSSSDDDDQSQTDNSSKFQNFQPHNDYHKAYPTKYNKKFINALMTQNQSQQQVSRENYFIPLQYPNTNTKPVNSYNLISANQNNANWMMPMFPSFGFIPQVPPVPYIIPPQNPAANHIPIMANGSNEEEEFSSGDYSMDY.

The interval 1-34 (MNIAEEPSDEVISSGPEDTDICSQQTSASAEAGD) is disordered. At S29 the chain carries Phosphoserine. RRM domains lie at 195 to 273 (GNIF…YHVE) and 295 to 418 (RCLF…KAVQ). The disordered stretch occupies residues 345 to 375 (SNTRSSSSVSFNEEGSVESNKSSNNTNGNAQ). Residues 347–364 (TRSSSSVSFNEEGSVESN) are compositionally biased toward low complexity. A compositionally biased stretch (polar residues) spans 365 to 374 (KSSNNTNGNA). Phosphoserine is present on residues S433, S435, S482, and S485. Residue T486 is modified to Phosphothreonine. Phosphoserine is present on S501. The RRM 3 domain occupies 540–638 (SNLYVKHIPL…QVLSVSFAQK (99 aa)). The tract at residues 640 to 668 (GNLSSSDDDDQSQTDNSSKFQNFQPHNDY) is disordered.

Interacts with RBG1.

This is an uncharacterized protein from Saccharomyces cerevisiae (strain ATCC 204508 / S288c) (Baker's yeast).